Reading from the N-terminus, the 372-residue chain is 3-ketodihydrosphingosine reductase TSC10 (372 aa).

Val-64 provides a ligand contact to NADP(+). NADPH-binding residues include Gly-67, Ser-69, Gly-71, Arg-92, Lys-96, Asp-123, and Leu-124. The GXSXG signature appears at 67–71; sequence GGSQG. NADP(+) is bound at residue Asp-123. Ser-205 functions as the Proton donor in the catalytic mechanism. Positions 219, 223, and 254 each coordinate NADP(+). Tyr-219 acts as the Proton acceptor in catalysis. Lys-223 (lowers pKa of active site Tyr) is an active-site residue. A helical membrane pass occupies residues 321–341; the sequence is LLQIPLAIFMCIFSPVWNAFV.

The protein belongs to the short-chain dehydrogenases/reductases (SDR) family.

It is found in the endoplasmic reticulum membrane. The enzyme catalyses sphinganine + NADP(+) = 3-oxosphinganine + NADPH + H(+). It functions in the pathway lipid metabolism; sphingolipid metabolism. In terms of biological role, catalyzes the reduction of 3'-oxosphinganine (3-ketodihydrosphingosine/KDS) to sphinganine (dihydrosphingosine/DHS), the second step of de novo sphingolipid biosynthesis. This Yarrowia lipolytica (strain CLIB 122 / E 150) (Yeast) protein is 3-ketodihydrosphingosine reductase TSC10 (TSC10).